The chain runs to 985 residues: Probable beta-galactosidase C (985 aa).

A signal peptide spans 1–23 (MRILSLLFLLLLGFLAGNRVVSA). Positions 82, 127, 128, 129, and 187 each coordinate substrate. Glutamate 188 functions as the Proton donor in the catalytic mechanism. Tyrosine 251 contacts substrate. Cysteine 257 and cysteine 304 are oxidised to a cystine. N-linked (GlcNAc...) asparagine glycosylation occurs at asparagine 276. The active-site Nucleophile is the glutamate 287. Tyrosine 353 contacts substrate. N-linked (GlcNAc...) asparagine glycosylation is found at asparagine 391, asparagine 434, asparagine 517, asparagine 602, asparagine 677, asparagine 715, asparagine 720, and asparagine 759.

It belongs to the glycosyl hydrolase 35 family.

Its subcellular location is the secreted. It catalyses the reaction Hydrolysis of terminal non-reducing beta-D-galactose residues in beta-D-galactosides.. In terms of biological role, cleaves beta-linked terminal galactosyl residues from gangliosides, glycoproteins, and glycosaminoglycans. In Aspergillus clavatus (strain ATCC 1007 / CBS 513.65 / DSM 816 / NCTC 3887 / NRRL 1 / QM 1276 / 107), this protein is Probable beta-galactosidase C (lacC).